We begin with the raw amino-acid sequence, 475 residues long: Tubulin epsilon chain (475 aa).

Residue Gly148–Gly154 participates in GTP binding.

The protein belongs to the tubulin family. Found in a complex with TEDC1, TEDC2, TUBE1 and TUBD1.

It localises to the cytoplasm. Its subcellular location is the cytoskeleton. The protein localises to the microtubule organizing center. The protein resides in the centrosome. The chain is Tubulin epsilon chain (TUBE1) from Homo sapiens (Human).